The chain runs to 475 residues: Ribulose bisphosphate carboxylase large chain (475 aa).

The propeptide occupies Met-1 to Val-2. Pro-3 is subject to N-acetylproline. Lys-14 bears the N6,N6,N6-trimethyllysine mark. Residues Asn-123 and Thr-173 each coordinate substrate. The active-site Proton acceptor is Lys-175. Lys-177 lines the substrate pocket. The Mg(2+) site is built by Lys-201, Asp-203, and Glu-204. At Lys-201 the chain carries N6-carboxylysine. His-294 functions as the Proton acceptor in the catalytic mechanism. Substrate-binding residues include Arg-295, His-327, and Ser-379.

Belongs to the RuBisCO large chain family. Type I subfamily. In terms of assembly, heterohexadecamer of 8 large chains and 8 small chains; disulfide-linked. The disulfide link is formed within the large subunit homodimers. Mg(2+) serves as cofactor. The disulfide bond which can form in the large chain dimeric partners within the hexadecamer appears to be associated with oxidative stress and protein turnover.

It is found in the plastid. The protein localises to the chloroplast. The catalysed reaction is 2 (2R)-3-phosphoglycerate + 2 H(+) = D-ribulose 1,5-bisphosphate + CO2 + H2O. It catalyses the reaction D-ribulose 1,5-bisphosphate + O2 = 2-phosphoglycolate + (2R)-3-phosphoglycerate + 2 H(+). Functionally, ruBisCO catalyzes two reactions: the carboxylation of D-ribulose 1,5-bisphosphate, the primary event in carbon dioxide fixation, as well as the oxidative fragmentation of the pentose substrate in the photorespiration process. Both reactions occur simultaneously and in competition at the same active site. The chain is Ribulose bisphosphate carboxylase large chain from Tetradesmus obliquus (Green alga).